The primary structure comprises 309 residues: Glutaminase (309 aa).

The substrate site is built by Ser64, Asn114, Glu160, Asn167, Tyr191, Tyr243, and Val261.

This sequence belongs to the glutaminase family. In terms of assembly, homotetramer.

The catalysed reaction is L-glutamine + H2O = L-glutamate + NH4(+). This chain is Glutaminase, found in Methylobacterium nodulans (strain LMG 21967 / CNCM I-2342 / ORS 2060).